A 259-amino-acid polypeptide reads, in one-letter code: UPF0246 protein NMA1114 (259 aa).

The protein belongs to the UPF0246 family.

The polypeptide is UPF0246 protein NMA1114 (Neisseria meningitidis serogroup A / serotype 4A (strain DSM 15465 / Z2491)).